Here is a 289-residue protein sequence, read N- to C-terminus: Orotidine 5'-phosphate decarboxylase (289 aa).

Lys-97 functions as the Proton donor in the catalytic mechanism.

This sequence belongs to the OMP decarboxylase family. Type 2 subfamily.

It carries out the reaction orotidine 5'-phosphate + H(+) = UMP + CO2. Its pathway is pyrimidine metabolism; UMP biosynthesis via de novo pathway; UMP from orotate: step 2/2. The polypeptide is Orotidine 5'-phosphate decarboxylase (Petrotoga mobilis (strain DSM 10674 / SJ95)).